The chain runs to 480 residues: Adenosylhomocysteinase (480 aa).

3 residues coordinate substrate: Thr-63, Asp-142, and Glu-203. Residue 204–206 participates in NAD(+) binding; it reads TTT. Residues Lys-233 and Asp-237 each contribute to the substrate site. NAD(+) is bound by residues Asn-238, 267–272, Glu-290, Asn-325, 346–348, and Asn-394; these read GYGDVG and IGH.

This sequence belongs to the adenosylhomocysteinase family. Requires NAD(+) as cofactor.

The protein resides in the cytoplasm. The catalysed reaction is S-adenosyl-L-homocysteine + H2O = L-homocysteine + adenosine. The protein operates within amino-acid biosynthesis; L-homocysteine biosynthesis; L-homocysteine from S-adenosyl-L-homocysteine: step 1/1. In terms of biological role, may play a key role in the regulation of the intracellular concentration of adenosylhomocysteine. This chain is Adenosylhomocysteinase, found in Xanthomonas campestris pv. campestris (strain 8004).